The sequence spans 189 residues: Ras-like protein 1 (189 aa).

10-17 (GAGGVGKS) is a binding site for GTP. The Effector region motif lies at 32-40 (YDPTIEDSY). GTP is bound by residues 57-61 (DTAGQ) and 116-119 (NKCD). A Cysteine methyl ester modification is found at Cys186. Cys186 is lipidated: S-geranylgeranyl cysteine. A propeptide spans 187–189 (KML) (removed in mature form).

Belongs to the small GTPase superfamily. Ras family.

It is found in the cell membrane. The catalysed reaction is GTP + H2O = GDP + phosphate + H(+). Its activity is regulated as follows. Alternates between an inactive form bound to GDP and an active form bound to GTP. Activated by a guanine nucleotide-exchange factor (GEF) and inactivated by a GTPase-activating protein (GAP). Ras proteins bind GDP/GTP and possess intrinsic GTPase activity. Plays a role in eye development by regulating cell growth, survival of postmitotic ommatidial cells and differentiation of photoreceptor cells. During larval development, mediates Ptth/tor signaling leading to the production of ecdysone, a hormone required for the initiation of metamorphosis. The polypeptide is Ras-like protein 1 (Drosophila ananassae (Fruit fly)).